Consider the following 874-residue polypeptide: Valine--tRNA ligase (874 aa).

A 'HIGH' region motif is present at residues 42–52 (PNITGRIHIGH). Residues 522–526 (KMSKS) carry the 'KMSKS' region motif. Lys-525 contributes to the ATP binding site. The stretch at 806–874 (DYIDIDTEKQ…KLQALLKEIS (69 aa)) forms a coiled coil.

This sequence belongs to the class-I aminoacyl-tRNA synthetase family. ValS type 1 subfamily. As to quaternary structure, monomer.

It is found in the cytoplasm. The enzyme catalyses tRNA(Val) + L-valine + ATP = L-valyl-tRNA(Val) + AMP + diphosphate. In terms of biological role, catalyzes the attachment of valine to tRNA(Val). As ValRS can inadvertently accommodate and process structurally similar amino acids such as threonine, to avoid such errors, it has a 'posttransfer' editing activity that hydrolyzes mischarged Thr-tRNA(Val) in a tRNA-dependent manner. This chain is Valine--tRNA ligase, found in Petrotoga mobilis (strain DSM 10674 / SJ95).